The sequence spans 219 residues: Octanoyltransferase (219 aa).

In terms of domain architecture, BPL/LPL catalytic spans 32–207 (ENSQDEIWIV…TLSQELGLDK (176 aa)). Residues 71–78 (RGGQVTYH), 138–140 (SLG), and 151–153 (GLA) contribute to the substrate site. Cysteine 169 serves as the catalytic Acyl-thioester intermediate.

This sequence belongs to the LipB family.

The protein resides in the cytoplasm. It catalyses the reaction octanoyl-[ACP] + L-lysyl-[protein] = N(6)-octanoyl-L-lysyl-[protein] + holo-[ACP] + H(+). It participates in protein modification; protein lipoylation via endogenous pathway; protein N(6)-(lipoyl)lysine from octanoyl-[acyl-carrier-protein]: step 1/2. Its function is as follows. Catalyzes the transfer of endogenously produced octanoic acid from octanoyl-acyl-carrier-protein onto the lipoyl domains of lipoate-dependent enzymes. Lipoyl-ACP can also act as a substrate although octanoyl-ACP is likely to be the physiological substrate. This Shewanella pealeana (strain ATCC 700345 / ANG-SQ1) protein is Octanoyltransferase.